The primary structure comprises 361 residues: UDP-3-O-acylglucosamine N-acyltransferase (361 aa).

The active-site Proton acceptor is H253.

It belongs to the transferase hexapeptide repeat family. LpxD subfamily. In terms of assembly, homotrimer.

It carries out the reaction a UDP-3-O-[(3R)-3-hydroxyacyl]-alpha-D-glucosamine + a (3R)-hydroxyacyl-[ACP] = a UDP-2-N,3-O-bis[(3R)-3-hydroxyacyl]-alpha-D-glucosamine + holo-[ACP] + H(+). Its pathway is bacterial outer membrane biogenesis; LPS lipid A biosynthesis. Catalyzes the N-acylation of UDP-3-O-acylglucosamine using 3-hydroxyacyl-ACP as the acyl donor. Is involved in the biosynthesis of lipid A, a phosphorylated glycolipid that anchors the lipopolysaccharide to the outer membrane of the cell. The sequence is that of UDP-3-O-acylglucosamine N-acyltransferase from Burkholderia pseudomallei (strain 1710b).